A 268-amino-acid chain; its full sequence is Zwei Ig domain protein zig-8 (268 aa).

A signal peptide spans 1–21; the sequence is MRRFSNICVILFSFLYATGHG. Ig-like C2-type domains lie at 40-128 and 140-251; these read PSQT…NTVY and PSPS…NSAT. A disulfide bond links cysteine 57 and cysteine 118. N-linked (GlcNAc...) asparagine glycosylation is found at asparagine 82, asparagine 155, asparagine 164, and asparagine 191. Residues cysteine 165 and cysteine 226 are joined by a disulfide bond.

As to expression, expressed in PVT neurons and pharyngeal muscles.

The protein resides in the secreted. In terms of biological role, together with zig-5, required postembryonically to maintain the position of ASI and ASH head neuron cell bodies and ventral nerve cord axons of PVQ, PVP and HSN neurons by preventing their displacement that could occur during body growth and movement. May act by reducing L1CAM-like protein sax-7 (long isoform) adhesion. The sequence is that of Zwei Ig domain protein zig-8 from Caenorhabditis elegans.